We begin with the raw amino-acid sequence, 1250 residues long: Protein suppressor of variegation 3-7 (1250 aa).

2 disordered regions span residues 107–148 and 160–186; these read LNNP…HSYH and HDPG…GGMR. A compositionally biased stretch (polar residues) spans 132–141; the sequence is STKTEPSSDA. Residues 164–175 are compositionally biased toward acidic residues; that stretch reads DSQDDDDEDDES. Phosphoserine is present on residues Ser-165, Ser-175, and Ser-176. C2H2-type zinc fingers lie at residues 217-236, 319-343, 425-446, and 487-512; these read CLYC…IQQH, CRIC…TKGH, CTLC…TRAH, and CSVC…SEKH. The span at 343–354 shows a compositional bias: basic and acidic residues; that stretch reads HMEALRNLDSDK. The tract at residues 343–398 is disordered; sequence HMEALRNLDSDKRSRKRKRSKSNSVTNSGGDEAEREKESEPEVGPEDAQDTPVVMM. Residues 525 to 564 are disordered; that stretch reads VGSADGRGGDNMDEEEAAASDQAQSSQTDDSEDNDDDNWS. Positions 543–552 are enriched in low complexity; it reads ASDQAQSSQT. The span at 553 to 563 shows a compositional bias: acidic residues; the sequence is DDSEDNDDDNW. The segment at 605 to 629 adopts a C2H2-type 5 zinc-finger fold; the sequence is QICKFCRVRFHNEAAKARHELSARH. A disordered region spans residues 642-684; it reads KLHQGTNTQTKHNAQDDEESQEQDEEYGEEEEDAEEDSQSNFD. A compositionally biased stretch (acidic residues) spans 657–679; that stretch reads DDEESQEQDEEYGEEEEDAEEDS. 2 consecutive C2H2-type zinc fingers follow at residues 737–761 and 829–852; these read CKLC…TSRH and CRVC…SRKH. Positions 851–860 are enriched in basic and acidic residues; that stretch reads KHVENKERQR. The interval 851 to 915 is disordered; sequence KHVENKERQR…PLAKRSRRSM (65 aa). Phosphoserine occurs at positions 871 and 873. A compositionally biased stretch (basic and acidic residues) spans 879-897; it reads DAERQESGMDKESENDMSV. Ser-975 carries the phosphoserine modification. The BESS domain occupies 987–1026; the sequence is RHVMDLFFDSISPTMKSLPPDLAAEGKSKIMQLVCSLELR. Low complexity predominate over residues 1032–1055; that stretch reads ATTPTPATVSASSKWPSSTTVTPV. Disordered stretches follow at residues 1032-1060, 1079-1116, 1154-1180, and 1205-1236; these read ATTP…TPPA, TTPH…NGSA, QSRT…ADLS, and NTPQ…NGCQ. 2 stretches are compositionally biased toward polar residues: residues 1079 to 1091 and 1104 to 1114; these read TTPH…QNNN and GASSAQVTING. Over residues 1206-1224 the composition is skewed to low complexity; that stretch reads TPQMQQPQQAQASITSSTP.

Interacts with Su(var)39 through the BESS domain.

It localises to the nucleus. Dose-limiting factor in position-effect variegation, the inactivation in some cells of a gene translocated next to heterochromatin. It could play a role in chromosome condensation. This is Protein suppressor of variegation 3-7 (Su(var)3-7) from Drosophila melanogaster (Fruit fly).